Here is a 411-residue protein sequence, read N- to C-terminus: Peptidyl-prolyl cis-trans isomerase (411 aa).

S2 bears the N-acetylserine mark. Disordered regions lie at residues 54–127 (IIKR…TLSP) and 160–302 (NYVK…PKSK). Over residues 61–87 (FEDDDFLGGDFDEDEIDEESSEEEEEE) the composition is skewed to acidic residues. Phosphoserine is present on residues S80 and S81. Phosphothreonine is present on T89. 2 stretches are compositionally biased toward acidic residues: residues 103–118 (ESED…DEFQ) and 173–242 (EGED…EEQK). A Phosphotyrosine; by CK2 modification is found at Y184. A Phosphoserine; by CK2 modification is found at S186. The segment covering 251–260 (KSKKEKKRKH) has biased composition (basic residues). The Nuclear localization signal signature appears at 256–271 (KKRKHEEKEEEKKAKK). Residues 261–296 (EEKEEEKKAKKVKKVEFKKDLEEGPTKPKSKKEQDK) are compositionally biased toward basic and acidic residues. In terms of domain architecture, PPIase FKBP-type spans 324-411 (GARVGMRYIG…FDVKLVSMKN (88 aa)).

The protein belongs to the FKBP-type PPIase family. FKBP3/4 subfamily. As to quaternary structure, interacts with NOP53. Phosphorylated at tyrosine and dephosphorylated by the phosphotyrosine-specific phosphoprotein phosphatase PTP1.

It localises to the nucleus. Its subcellular location is the nucleolus. The enzyme catalyses [protein]-peptidylproline (omega=180) = [protein]-peptidylproline (omega=0). With respect to regulation, inhibited by both FK506 and rapamycin. Functionally, proline isomerase that belongs to an abundant class of enzymes that catalyze the cis-trans isomerization of X-Pro peptide bonds and can accelerate the refolding of proline-containing polypeptides. Specifically binds nuclear localization sequences. May be involved in the assembly or folding of ribosomal proteins. The polypeptide is Peptidyl-prolyl cis-trans isomerase (Saccharomyces cerevisiae (strain ATCC 204508 / S288c) (Baker's yeast)).